A 169-amino-acid chain; its full sequence is Co-chaperone protein HscB homolog (169 aa).

A J domain is found at 2 to 74 (NYFDLFSLPV…CLRAQYLLLL (73 aa)).

Belongs to the HscB family. In terms of assembly, interacts with HscA and stimulates its ATPase activity.

In terms of biological role, co-chaperone involved in the maturation of iron-sulfur cluster-containing proteins. Seems to help targeting proteins to be folded toward HscA. The chain is Co-chaperone protein HscB homolog from Psychromonas ingrahamii (strain DSM 17664 / CCUG 51855 / 37).